The following is a 534-amino-acid chain: ATP-dependent rRNA helicase RRP3 (534 aa).

Residues 67–107 form a disordered region; it reads KQQALQKQQKQQKQQEQENANHNQTESSLSSSSSTTSSSIT. Low complexity-rich tracts occupy residues 68-80 and 91-107; these read QQAL…QQKQ and TESS…SSIT. Residues 118–146 carry the Q motif motif; that stretch reads KTFKELNLVPDLLESIESMKFTKPTPIQS. A Helicase ATP-binding domain is found at 149–320; sequence IPHALEGKDI…RASLHNPVRV (172 aa). 162 to 169 contacts ATP; it reads AQTGSGKT. The short motif at 268 to 271 is the DEAD box element; it reads DEAD. In terms of domain architecture, Helicase C-terminal spans 347-492; that stretch reads ILIHLLNEFM…EDKPPKEVLD (146 aa). Composition is skewed to basic and acidic residues over residues 505-517 and 525-534; these read AIRQ…DKRN and NRDDADREER. Residues 505–534 form a disordered region; the sequence is AIRQTKEIHDKRNGGGGRRRNRDDADREER.

This sequence belongs to the DEAD box helicase family. DDX47/RRP3 subfamily. In terms of assembly, interacts with the SSU processome.

It is found in the nucleus. It catalyses the reaction ATP + H2O = ADP + phosphate + H(+). Functionally, ATP-dependent rRNA helicase required for pre-ribosomal RNA processing. Involved in the maturation of the 35S-pre-rRNA and to its cleavage to mature 18S rRNA. The protein is ATP-dependent rRNA helicase RRP3 of Candida albicans (strain SC5314 / ATCC MYA-2876) (Yeast).